Reading from the N-terminus, the 165-residue chain is Putative TRAP transporter small permease protein HI_0051 (165 aa).

Transmembrane regions (helical) follow at residues 20-40 (LEYL…FNSV), 51-71 (FSEE…IILV), 94-114 (IVLI…AYGA), and 136-156 (LYLA…FSMI).

This sequence belongs to the TRAP transporter small permease family.

It localises to the cell inner membrane. The chain is Putative TRAP transporter small permease protein HI_0051 from Haemophilus influenzae (strain ATCC 51907 / DSM 11121 / KW20 / Rd).